We begin with the raw amino-acid sequence, 637 residues long: Sodium-dependent phosphate transport protein 2A (637 aa).

At 1 to 103 (MMSYSERLGG…LAQVGTKLLK (103 aa)) the chain is on the cytoplasmic side. Phosphoserine occurs at positions 14 and 34. Residues 104-125 (VPLMLAFLYLFVCSLDVLSSAF) form a helical membrane-spanning segment. Residues 126 to 145 (QLAGGKVAGDIFKDNAILSN) are Extracellular-facing. A helical transmembrane segment spans residues 146 to 163 (PVAGLVVGILVTVLVQSS). Topologically, residues 164-165 (ST) are cytoplasmic. A helical membrane pass occupies residues 166 to 185 (STSIIVSMVSSGLLEVSSAI). The Extracellular portion of the chain corresponds to 186 to 345 (PIIMGSNIGT…HIFVDTGLPD (160 aa)). 2 disulfides stabilise this stretch: cysteine 225-cysteine 520 and cysteine 306-cysteine 334. N-linked (GlcNAc...) asparagine glycans are attached at residues asparagine 298 and asparagine 328. A helical transmembrane segment spans residues 346-368 (LAVGLILLAGSLVVLCTCLILLV). Residues 369–410 (KMLNSLLKGQVMSSRRSSTQTDFPAPFTWVTGYFAMVVGASM) lie on the Cytoplasmic side of the membrane. The chain crosses the membrane as a helical span at residues 411–434 (TFVVQSSSVFTSAITPLIGLGVIS). Residues 435–464 (IERAYPLTLGSNIGTTTTAILAALASPREK) lie on the Extracellular side of the membrane. A helical transmembrane segment spans residues 465–485 (LSSSFQIALCHFFFNISGILL). Residues 486 to 511 (WYPLPCTRLPIRMAKALGKRTAKYRW) lie on the Cytoplasmic side of the membrane. A Phosphothreonine; by PKC modification is found at threonine 506. The helical transmembrane segment at 512–532 (FAVLYLLVCFLLLPSLVFGIS) threads the bilayer. Residues 533-537 (MAGWQ) lie on the Extracellular side of the membrane. A helical membrane pass occupies residues 538–559 (AMVGVGTPFGALLAFVVLVNVL). Residues 560 to 637 (QSRSPGHLPK…LPAHHNATRL (78 aa)) lie on the Cytoplasmic side of the membrane. Serine 605 carries the phosphoserine modification. Residue threonine 621 is modified to Phosphothreonine. Serine 623 is subject to Phosphoserine.

Belongs to the SLC34A transporter family. In terms of assembly, interacts via its C-terminal region with NHERF4. Interacts with NHERF1. Interacts with TMEM174; regulates SLC34A1 internalization by PTH and FGF23. In terms of tissue distribution, kidney.

Its subcellular location is the apical cell membrane. The protein localises to the cell membrane. It carries out the reaction 3 Na(+)(out) + phosphate(out) = 3 Na(+)(in) + phosphate(in). Involved in actively transporting phosphate into cells via Na(+) cotransport in the renal brush border membrane. The cotransport has a Na(+):Pi stoichiometry of 3:1 and is electrogenic. The protein is Sodium-dependent phosphate transport protein 2A of Mus musculus (Mouse).